Consider the following 761-residue polypeptide: MTGNPAAPAATSVSPPAEQPYQELGLTDDEYARIIATLGRRPSDAELAMYSVMWSEHCSYKSSKVHLRQFRDTPLTDRLLVGMGENAGVVDVGEGLAVTFKIESHNHPSFVEPYQGAATGVGGIVRDILTMGARPIGVLDPLRFGEADAADTARVLPGVVAGIGGYGNCLGLPTIGGEVVFDPTYAGNPLVNALCVGVMPVDRVQTSAATGVGNAVVLLGAKTGRDGIGGVSILASATFDEGGGPARRPSVQVGDPFTEKILIETCLELFDRKLVTGIQDLGGAGLTCALTETTAAGIATGQPGGMEVDLDLVPLREASMAAHEVLASESQERMLAIVTPEALPEVLALAERWGVLATRIGTVTNSGRLTVRWHGEVVVDVPPGSLADDGPVYERPLRRPVDFDLVRADAPTPARLARPRTGPELRETLLRLVASPNLCSRAWVTDQYDRYVQAGTVLAQPEDAGVLRLSAATGLGIALATDGNGRYARLDPFAGTQLALAEACRNVAAAGSVPIAVTNCLNFGSPEDPEVMWQFAQACAGLAEGCRRLGLPVTGGNVSFYNQTGSTPIHPTPVIGVLGLFDDVTRRTPIGFAEEGDVLILLGETADEFGGSEWAWVTHRHLGGEPPAVDFAREKLLGEILVAGSRDGMLTAAHDLSDGGLAQALVESCLRGGHGARIILPAGSDPFVELFSESAGRAVVAVPRAEELRFTDMCEVRGLPWRRVGVVDGDTLDVQDAFTVGLDELRAAHEGTLPALFGRLT.

Low complexity predominate over residues 1 to 16; that stretch reads MTGNPAAPAATSVSPP. The disordered stretch occupies residues 1-21; sequence MTGNPAAPAATSVSPPAEQPY. H57 is an active-site residue. The ATP site is built by Y60 and K101. Residue E103 coordinates Mg(2+). Residues 104 to 107 and R126 contribute to the substrate site; that span reads SHNH. H105 serves as the catalytic Proton acceptor. D127 is a binding site for Mg(2+). Q252 is a substrate binding site. D280 contributes to the Mg(2+) binding site. Substrate is bound at residue 329 to 331; the sequence is ESQ. 2 residues coordinate ATP: N519 and G556. A Mg(2+)-binding site is contributed by N557. Substrate is bound at residue S559.

This sequence belongs to the FGAMS family. Monomer. Part of the FGAM synthase complex composed of 1 PurL, 1 PurQ and 2 PurS subunits.

The protein resides in the cytoplasm. The catalysed reaction is N(2)-formyl-N(1)-(5-phospho-beta-D-ribosyl)glycinamide + L-glutamine + ATP + H2O = 2-formamido-N(1)-(5-O-phospho-beta-D-ribosyl)acetamidine + L-glutamate + ADP + phosphate + H(+). Its pathway is purine metabolism; IMP biosynthesis via de novo pathway; 5-amino-1-(5-phospho-D-ribosyl)imidazole from N(2)-formyl-N(1)-(5-phospho-D-ribosyl)glycinamide: step 1/2. Part of the phosphoribosylformylglycinamidine synthase complex involved in the purines biosynthetic pathway. Catalyzes the ATP-dependent conversion of formylglycinamide ribonucleotide (FGAR) and glutamine to yield formylglycinamidine ribonucleotide (FGAM) and glutamate. The FGAM synthase complex is composed of three subunits. PurQ produces an ammonia molecule by converting glutamine to glutamate. PurL transfers the ammonia molecule to FGAR to form FGAM in an ATP-dependent manner. PurS interacts with PurQ and PurL and is thought to assist in the transfer of the ammonia molecule from PurQ to PurL. The chain is Phosphoribosylformylglycinamidine synthase subunit PurL from Frankia casuarinae (strain DSM 45818 / CECT 9043 / HFP020203 / CcI3).